Reading from the N-terminus, the 450-residue chain is Phosphoglucosamine mutase (450 aa).

Ser-101 functions as the Phosphoserine intermediate in the catalytic mechanism. Residues Ser-101, Asp-241, Asp-243, and Asp-245 each contribute to the Mg(2+) site. A Phosphoserine modification is found at Ser-101.

It belongs to the phosphohexose mutase family. Mg(2+) serves as cofactor. Activated by phosphorylation.

It catalyses the reaction alpha-D-glucosamine 1-phosphate = D-glucosamine 6-phosphate. Its function is as follows. Catalyzes the conversion of glucosamine-6-phosphate to glucosamine-1-phosphate. This Listeria monocytogenes serotype 4b (strain F2365) protein is Phosphoglucosamine mutase.